A 590-amino-acid chain; its full sequence is Mitochondrial distribution and morphology protein 34 (590 aa).

The SMP-LTD domain maps to 1–225 (MSFIFNRETF…LPSVIFNMSQ (225 aa)). Basic residues predominate over residues 393-405 (RRKIKMRSRKPSK). The interval 393–456 (RRKIKMRSRK…APEGGPNAED (64 aa)) is disordered. Residues 413-427 (PAQNDSGTSSCSNVA) show a composition bias toward polar residues.

It belongs to the MDM34 family. As to quaternary structure, component of the ER-mitochondria encounter structure (ERMES) or MDM complex, composed of MMM1, MDM10, MDM12 and MDM34.

It localises to the mitochondrion outer membrane. Its function is as follows. Component of the ERMES/MDM complex, which serves as a molecular tether to connect the endoplasmic reticulum (ER) and mitochondria. Components of this complex are involved in the control of mitochondrial shape and protein biogenesis, and function in nonvesicular lipid trafficking between the ER and mitochondria. MDM34 is required for the interaction of the ER-resident membrane protein MMM1 and the outer mitochondrial membrane-resident beta-barrel protein MDM10. This is Mitochondrial distribution and morphology protein 34 from Eremothecium gossypii (strain ATCC 10895 / CBS 109.51 / FGSC 9923 / NRRL Y-1056) (Yeast).